Here is an 87-residue protein sequence, read N- to C-terminus: UPF0335 protein RL4065 (87 aa).

The protein belongs to the UPF0335 family.

This Rhizobium johnstonii (strain DSM 114642 / LMG 32736 / 3841) (Rhizobium leguminosarum bv. viciae) protein is UPF0335 protein RL4065.